Here is a 238-residue protein sequence, read N- to C-terminus: Probable transcriptional regulatory protein CTA_0499 (238 aa).

The interval 1–21 (MAGHSKWANTKHRKERADHKK) is disordered. Residues 9-21 (NTKHRKERADHKK) are compositionally biased toward basic residues.

This sequence belongs to the TACO1 family.

Its subcellular location is the cytoplasm. This Chlamydia trachomatis serovar A (strain ATCC VR-571B / DSM 19440 / HAR-13) protein is Probable transcriptional regulatory protein CTA_0499.